Reading from the N-terminus, the 380-residue chain is Cytochrome b (380 aa).

Helical transmembrane passes span 33 to 53 (FGSL…FLAM), 77 to 98 (WLIR…YMHI), 113 to 133 (WNIG…GYVL), and 178 to 198 (FFAF…LHLL). Heme b contacts are provided by His83 and His97. Residues His182 and His196 each coordinate heme b. Position 201 (His201) interacts with a ubiquinone. 4 helical membrane-spanning segments follow: residues 226–246 (YKDL…ALFA), 288–308 (LGGV…PILH), 320–340 (LTQF…WIGG), and 347–367 (FIII…VLSP).

It belongs to the cytochrome b family. In terms of assembly, the cytochrome bc1 complex contains 3 respiratory subunits (MT-CYB, CYC1 and UQCRFS1), 2 core proteins (UQCRC1 and UQCRC2) and probably 6 low-molecular weight proteins. The cofactor is heme b.

It localises to the mitochondrion inner membrane. Functionally, component of the ubiquinol-cytochrome c reductase complex (complex III or cytochrome b-c1 complex) that is part of the mitochondrial respiratory chain. The b-c1 complex mediates electron transfer from ubiquinol to cytochrome c. Contributes to the generation of a proton gradient across the mitochondrial membrane that is then used for ATP synthesis. In Oncorhynchus mykiss (Rainbow trout), this protein is Cytochrome b (mt-cyb).